Consider the following 463-residue polypeptide: Chromosomal replication initiator protein DnaA (463 aa).

Residues 1–83 (MSTNQIILTD…LQLFQHYNNT (83 aa)) form a domain I, interacts with DnaA modulators region. A domain II region spans residues 83–124 (TIKSIEIITKELPGITQTVIALPTKTFADIGSSELNAENIFS). A domain III, AAA+ region region spans residues 125–343 (TLDVRFTFDN…GALNKVIAHS (219 aa)). ATP is bound by residues G171, G173, K174, and T175. Residues 344-463 (NFTLKEITLE…INLLMKILQN (120 aa)) are domain IV, binds dsDNA.

The protein belongs to the DnaA family. In terms of assembly, oligomerizes as a right-handed, spiral filament on DNA at oriC.

It is found in the cytoplasm. Its function is as follows. Plays an essential role in the initiation and regulation of chromosomal replication. ATP-DnaA binds to the origin of replication (oriC) to initiate formation of the DNA replication initiation complex once per cell cycle. Binds the DnaA box (a 9 base pair repeat at the origin) and separates the double-stranded (ds)DNA. Forms a right-handed helical filament on oriC DNA; dsDNA binds to the exterior of the filament while single-stranded (ss)DNA is stabiized in the filament's interior. The ATP-DnaA-oriC complex binds and stabilizes one strand of the AT-rich DNA unwinding element (DUE), permitting loading of DNA polymerase. After initiation quickly degrades to an ADP-DnaA complex that is not apt for DNA replication. Binds acidic phospholipids. The polypeptide is Chromosomal replication initiator protein DnaA (Rickettsia massiliae (strain Mtu5)).